Here is a 142-residue protein sequence, read N- to C-terminus: Large ribosomal subunit protein uL11 (142 aa).

Residues 84 to 103 are disordered; that stretch reads AGVKSGSGRPNSDKVGTVTD.

It belongs to the universal ribosomal protein uL11 family. Part of the ribosomal stalk of the 50S ribosomal subunit. Interacts with L10 and the large rRNA to form the base of the stalk. L10 forms an elongated spine to which L12 dimers bind in a sequential fashion forming a multimeric L10(L12)X complex. In terms of processing, one or more lysine residues are methylated.

Forms part of the ribosomal stalk which helps the ribosome interact with GTP-bound translation factors. The sequence is that of Large ribosomal subunit protein uL11 from Aliivibrio salmonicida (strain LFI1238) (Vibrio salmonicida (strain LFI1238)).